The primary structure comprises 496 residues: Probable cytosol aminopeptidase (496 aa).

Positions 268 and 273 each coordinate Mn(2+). The active site involves Lys-280. The Mn(2+) site is built by Asp-291, Asp-350, and Glu-352. The active site involves Arg-354.

It belongs to the peptidase M17 family. The cofactor is Mn(2+).

The protein localises to the cytoplasm. The enzyme catalyses Release of an N-terminal amino acid, Xaa-|-Yaa-, in which Xaa is preferably Leu, but may be other amino acids including Pro although not Arg or Lys, and Yaa may be Pro. Amino acid amides and methyl esters are also readily hydrolyzed, but rates on arylamides are exceedingly low.. It carries out the reaction Release of an N-terminal amino acid, preferentially leucine, but not glutamic or aspartic acids.. Presumably involved in the processing and regular turnover of intracellular proteins. Catalyzes the removal of unsubstituted N-terminal amino acids from various peptides. This Thioalkalivibrio sulfidiphilus (strain HL-EbGR7) protein is Probable cytosol aminopeptidase.